Reading from the N-terminus, the 189-residue chain is Ribose 1,5-bisphosphate phosphokinase PhnN (189 aa).

10–17 contributes to the ATP binding site; the sequence is GPSGSGKD.

Belongs to the ribose 1,5-bisphosphokinase family.

It catalyses the reaction alpha-D-ribose 1,5-bisphosphate + ATP = 5-phospho-alpha-D-ribose 1-diphosphate + ADP. Its pathway is metabolic intermediate biosynthesis; 5-phospho-alpha-D-ribose 1-diphosphate biosynthesis; 5-phospho-alpha-D-ribose 1-diphosphate from D-ribose 5-phosphate (route II): step 3/3. In terms of biological role, catalyzes the phosphorylation of ribose 1,5-bisphosphate to 5-phospho-D-ribosyl alpha-1-diphosphate (PRPP). This Enterobacter lignolyticus (strain SCF1) protein is Ribose 1,5-bisphosphate phosphokinase PhnN.